Here is a 228-residue protein sequence, read N- to C-terminus: MTQDELKALVAQAAADYVKQEVPEGAVLGVGTGSTANLFIDAVAAFKDRFAGAVSSSEASTRRLQQHGFKVLDLNEVDEIPVYVDGADEIDASGAMVKGGGGALTREKIVASVARRFVCIADGSKLVQTMGAFPLPVEVVPMARAAVARKLQALGGQPRLRMTKEGGIYKTDNGNVILDVAGLKIDDPRGLEQTINQVPGVVTVGLFALRGADVLLLGTGDGVQRTDY.

Residues 32-35, 85-88, and 98-101 contribute to the substrate site; these read TGST, DGAD, and KGGG. Glutamate 107 acts as the Proton acceptor in catalysis. Position 125 (lysine 125) interacts with substrate.

This sequence belongs to the ribose 5-phosphate isomerase family. In terms of assembly, homodimer.

The catalysed reaction is aldehydo-D-ribose 5-phosphate = D-ribulose 5-phosphate. The protein operates within carbohydrate degradation; pentose phosphate pathway; D-ribose 5-phosphate from D-ribulose 5-phosphate (non-oxidative stage): step 1/1. In terms of biological role, catalyzes the reversible conversion of ribose-5-phosphate to ribulose 5-phosphate. This chain is Ribose-5-phosphate isomerase A, found in Cupriavidus taiwanensis (strain DSM 17343 / BCRC 17206 / CCUG 44338 / CIP 107171 / LMG 19424 / R1) (Ralstonia taiwanensis (strain LMG 19424)).